The sequence spans 960 residues: Testis anion transporter 1 (960 aa).

Residues 1-93 (MQPDRSFQSF…YRFKDWLLGD (93 aa)) lie on the Cytoplasmic side of the membrane. The chain crosses the membrane as a helical span at residues 94 to 114 (LLAGISVGLVQIPQVLMLGLL). Residues 115–117 (ARH) are Extracellular-facing. A helical membrane pass occupies residues 118-138 (LIPPLNVSYAAFCASVIYGIF). Residue G139 is a topological domain, cytoplasmic. Residues 140–160 (SCHQMSIGTFFLVSALAINVL) form a helical membrane-spanning segment. The Extracellular segment spans residues 161 to 201 (RTQPFNRGHLLLGTFIQADFSNTSFYENYNRSLSSVASVTL). An N-linked (GlcNAc...) asparagine glycan is attached at N190. The next 2 membrane-spanning stretches (helical) occupy residues 202–222 (LTGI…VAYI) and 223–243 (PEAA…LSQL). Over 244 to 268 (TCIFGIMISYNSGPIAFFYNIINYC) the chain is Cytoplasmic. The chain crosses the membrane as a helical span at residues 269 to 289 (LGLPKANSTSILLFLTAMVAL). Over 290 to 353 (RINKCIRISF…PVTPDMSNLT (64 aa)) the chain is Extracellular. Residues 354–374 (EVLIESFSLALVSSSLLVFLG) traverse the membrane as a helical segment. Over 375–390 (KKIASFHNYDVNSNQD) the chain is Cytoplasmic. Residues 391–411 (LIAIGLCNVVSSFFRSYVFTG) traverse the membrane as a helical segment. Topologically, residues 412-427 (AVARTIIQDKTGGRQQ) are extracellular. A helical membrane pass occupies residues 428 to 448 (FASLVGAGIMLLLMMKMARFF). Residues 449–453 (YRLPN) lie on the Cytoplasmic side of the membrane. Residues 454 to 474 (AIVAGIILSNVLPYLEAVYTL) form a helical membrane-spanning segment. Over 475–494 (PSLWRQNQYDCLIWMVTFMS) the chain is Extracellular. Residues 495 to 515 (AILLGLDIGLVVAVTFAFFII) form a helical membrane-spanning segment. At 516-960 (TVQSHRTKIL…ADTSEDALEI (445 aa)) the chain is on the cytoplasmic side. One can recognise an STAS domain in the interval 541–792 (DYREVANIPG…LTLHDAVLFA (252 aa)). Residues 662-957 (ITSSSSQRNP…TSKADTSEDA (296 aa)) are interaction with RACGAP1. 2 disordered regions span residues 807-857 (ESET…EESD) and 881-960 (EVEP…ALEI). Residues 818–827 (ETDKKEESRH) show a composition bias toward basic and acidic residues. Residues 884 to 904 (PESELEPESELDQETELEPEP) show a composition bias toward acidic residues. Residues 926–935 (SPTQTQARTQ) show a composition bias toward polar residues.

The protein belongs to the SLC26A/SulP transporter (TC 2.A.53) family. As to quaternary structure, interacts with RACGAP1. Interacts with CFTR; stimulates anion transport activity of CFTR. Post-translationally, N-glycosylated.

The protein localises to the membrane. The enzyme catalyses sulfate(out) + chloride(in) = sulfate(in) + chloride(out). The catalysed reaction is oxalate(in) + chloride(out) = oxalate(out) + chloride(in). In terms of biological role, antiporter that mediates the exchange of sulfate and oxalate against chloride ions across a membrane. Stimulates anion transport activity of CFTR. May cooperate with CFTR in the regulation of chloride and bicarbonate ions fluxes required for activation of the ADCY10/PKA pathway during sperm motility and sperm capacitation. May play a role in sperm tail differentiation and motility and hence male fertility. In Bos taurus (Bovine), this protein is Testis anion transporter 1.